Consider the following 179-residue polypeptide: Centromere protein R (179 aa).

The segment at 1–79 (MSAKRSLKLD…RLSRRGQPQT (79 aa)) is disordered. A compositionally biased stretch (polar residues) spans 30–50 (NSYSPTTGTCQISPFSSPTSH). Over residues 51–64 (NAEDLRNGLSHGDE) the composition is skewed to basic and acidic residues. Positions 172–176 (LQLLL) match the LXXLL motif motif.

Its subcellular location is the nucleus. It is found in the chromosome. It localises to the centromere. The protein resides in the kinetochore. Functionally, transcription coregulator that can have both coactivator and corepressor functions. Involved in the coactivation of nuclear receptors for retinoid X (RXRs) and thyroid hormone (TRs) in a ligand-dependent fashion. Probable component of a centromeric complex involved in assembly of kinetochore proteins, mitotic progression and chromosome segregation. The chain is Centromere protein R (CENPR) from Gallus gallus (Chicken).